The primary structure comprises 264 residues: Phosphatidylglycerol--prolipoprotein diacylglyceryl transferase (264 aa).

The next 7 membrane-spanning stretches (helical) occupy residues 14 to 34 (IIFS…LIGF), 60 to 80 (LIYT…VFFY), 98 to 118 (GGMS…WVSF), 128 to 148 (ADFI…GNFI), 176 to 196 (SQLY…NWFI), 203 to 223 (GSVA…VEYV), and 240 to 260 (GQLL…WAYS). An a 1,2-diacyl-sn-glycero-3-phospho-(1'-sn-glycerol)-binding site is contributed by R143.

This sequence belongs to the Lgt family.

It is found in the cell inner membrane. The catalysed reaction is L-cysteinyl-[prolipoprotein] + a 1,2-diacyl-sn-glycero-3-phospho-(1'-sn-glycerol) = an S-1,2-diacyl-sn-glyceryl-L-cysteinyl-[prolipoprotein] + sn-glycerol 1-phosphate + H(+). The protein operates within protein modification; lipoprotein biosynthesis (diacylglyceryl transfer). Functionally, catalyzes the transfer of the diacylglyceryl group from phosphatidylglycerol to the sulfhydryl group of the N-terminal cysteine of a prolipoprotein, the first step in the formation of mature lipoproteins. This is Phosphatidylglycerol--prolipoprotein diacylglyceryl transferase from Actinobacillus pleuropneumoniae serotype 7 (strain AP76).